The chain runs to 257 residues: MALAKRIIPCLDVTAGRVVKGVNFVELRDAGDPVEIARRYDDQGADELTFLDITATSDGRDLILPIIEAVASQVFIPLTVGGGVRAVEDVRRLLNAGADKVSMNSSAVANPQLVRDAADKYGSQCIVVAIDAKRVSAEGEPPRWEVFTHGGRKGTGLDAVEWARKMAEFGAGEILLTSMDRDGTKAGFDLALTRAVSDAVPVPVIASGGVGSLEHLAAGITEGHADAVLAASIFHYGEHTVGEAKRYMAERGIAVRL.

Residues aspartate 12 and aspartate 131 contribute to the active site.

This sequence belongs to the HisA/HisF family. As to quaternary structure, heterodimer of HisH and HisF.

The protein resides in the cytoplasm. The enzyme catalyses 5-[(5-phospho-1-deoxy-D-ribulos-1-ylimino)methylamino]-1-(5-phospho-beta-D-ribosyl)imidazole-4-carboxamide + L-glutamine = D-erythro-1-(imidazol-4-yl)glycerol 3-phosphate + 5-amino-1-(5-phospho-beta-D-ribosyl)imidazole-4-carboxamide + L-glutamate + H(+). The protein operates within amino-acid biosynthesis; L-histidine biosynthesis; L-histidine from 5-phospho-alpha-D-ribose 1-diphosphate: step 5/9. In terms of biological role, IGPS catalyzes the conversion of PRFAR and glutamine to IGP, AICAR and glutamate. The HisF subunit catalyzes the cyclization activity that produces IGP and AICAR from PRFAR using the ammonia provided by the HisH subunit. The sequence is that of Imidazole glycerol phosphate synthase subunit HisF from Burkholderia thailandensis (strain ATCC 700388 / DSM 13276 / CCUG 48851 / CIP 106301 / E264).